A 549-amino-acid chain; its full sequence is Glucose-6-phosphate isomerase (549 aa).

Glu-355 acts as the Proton donor in catalysis. Active-site residues include His-386 and Lys-514.

The protein belongs to the GPI family.

It localises to the cytoplasm. It carries out the reaction alpha-D-glucose 6-phosphate = beta-D-fructose 6-phosphate. It participates in carbohydrate biosynthesis; gluconeogenesis. It functions in the pathway carbohydrate degradation; glycolysis; D-glyceraldehyde 3-phosphate and glycerone phosphate from D-glucose: step 2/4. Functionally, catalyzes the reversible isomerization of glucose-6-phosphate to fructose-6-phosphate. The sequence is that of Glucose-6-phosphate isomerase from Klebsiella pneumoniae (strain 342).